A 224-amino-acid chain; its full sequence is tRNA (guanine-N(7)-)-methyltransferase (224 aa).

Glutamate 52, aspartate 77, and aspartate 126 together coordinate S-adenosyl-L-methionine. The active site involves aspartate 126. Substrate contacts are provided by lysine 130 and aspartate 162.

The protein belongs to the class I-like SAM-binding methyltransferase superfamily. TrmB family.

The catalysed reaction is guanosine(46) in tRNA + S-adenosyl-L-methionine = N(7)-methylguanosine(46) in tRNA + S-adenosyl-L-homocysteine. Its pathway is tRNA modification; N(7)-methylguanine-tRNA biosynthesis. Its function is as follows. Catalyzes the formation of N(7)-methylguanine at position 46 (m7G46) in tRNA. The protein is tRNA (guanine-N(7)-)-methyltransferase of Christiangramia forsetii (strain DSM 17595 / CGMCC 1.15422 / KT0803) (Gramella forsetii).